A 20-amino-acid polypeptide reads, in one-letter code: 39 kDa major outer membrane protein (20 aa).

The protein resides in the cell outer membrane. The sequence is that of 39 kDa major outer membrane protein from Aggregatibacter actinomycetemcomitans (Actinobacillus actinomycetemcomitans).